We begin with the raw amino-acid sequence, 1304 residues long: Zinc finger CCCH domain-containing protein 4 (1304 aa).

Residues 1–33 (MEAVPGTPPPPPSESPPPPSPPPPSTPSPPPCS) are compositionally biased toward pro residues. The segment at 1–387 (MEAVPGTPPP…SDHDKPHQQS (387 aa)) is disordered. Positions 53–73 (DREDGELEEGELEDDGAEEVQ) are enriched in acidic residues. Residues 80 to 99 (ERSRKEKGEKHHSDSEEEKS) show a composition bias toward basic and acidic residues. Serine 92 and serine 94 each carry phosphoserine. A coiled-coil region spans residues 94–128 (SEEEKSHRRLKRKRKKEREKEKRRSKKRRKSKHKR). A compositionally biased stretch (basic residues) spans 100–130 (HRRLKRKRKKEREKEKRRSKKRRKSKHKRHA). Positions 135 to 144 (DFSDFSDDSD) are enriched in acidic residues. Position 155 is a phosphotyrosine (tyrosine 155). Polar residues predominate over residues 165–174 (SHQQYSSSHN). Over residues 194-218 (EDYENEQYGEYEGDEEEDMGKEDYD) the composition is skewed to acidic residues. The segment covering 219–235 (DFTKELNQYRRAKEGSS) has biased composition (basic and acidic residues). Residues 238–251 (RGSRGRGRGYRGRG) are compositionally biased toward basic residues. A compositionally biased stretch (gly residues) spans 252–264 (SRGGSRGRGMGRG). Residues 277-303 (PEDEEDLYEEEIEYGESEEPMGDDDYD) are compositionally biased toward acidic residues. The segment covering 304–320 (DYSKELNQYRRSKDSRG) has biased composition (basic and acidic residues). The segment covering 322-346 (GLSRGRGRGSRGGRGKGMGRGRGRG) has biased composition (basic residues). Over residues 357–368 (NDDEDFYDDDMG) the composition is skewed to acidic residues. Basic and acidic residues predominate over residues 376-387 (RRSDHDKPHQQS). 3 C3H1-type zinc fingers span residues 389 to 416 (KKGK…HDIE), 418 to 445 (PKKR…HGDF), and 446 to 469 (PCKL…HDPL). Residues 485-495 (AEAGAEDEKEV) show a composition bias toward acidic residues. Residues 485-567 (AEAGAEDEKE…LPTHEPLSPQ (83 aa)) are disordered. Composition is skewed to pro residues over residues 506 to 529 (LPKP…PAPT) and 538 to 556 (GGPP…PPQM). Arginine 599 is subject to Asymmetric dimethylarginine. Disordered stretches follow at residues 601 to 691 (PGPG…DSPH), 719 to 970 (PGLV…SHIK), and 994 to 1304 (LPIP…PFCQ). The segment covering 603 to 622 (PGGPSGPMGPGPNMGPPGPM) has biased composition (pro residues). The span at 628–660 (PDMHPDMHPDMHPDMHPDMHPDMHPDMHPDMHP) shows a compositional bias: basic and acidic residues. Positions 669 to 683 (NPGPPMGPGGPPMMP) are enriched in pro residues. A coiled-coil region spans residues 778–809 (ALYLRIQQKQQEEERARRLAESSKQDRENEEG). Residues 787-804 (QQEEERARRLAESSKQDR) are compositionally biased toward basic and acidic residues. Residues serine 816 and serine 817 each carry the phosphoserine modification. Polar residues predominate over residues 824-852 (SSVTSILKTLRQQTSSRPQASVGEPSSSG). Residues 869 to 884 (SDPRLSRDPRLSRHAE) show a composition bias toward basic and acidic residues. A phosphoserine mark is found at serine 913, serine 916, and serine 917. Low complexity predominate over residues 913–929 (SLHSSPAGPSSSKGQPP). The segment covering 994-1005 (LPIPKQDVPPVP) has biased composition (pro residues). 2 stretches are compositionally biased toward polar residues: residues 1028–1044 (NTRQ…SGSN) and 1058–1067 (VNVNTPGQSE). Residues 1068 to 1085 (KPSDPRVRKTPTDPRLQK) are compositionally biased toward basic and acidic residues. Low complexity-rich tracts occupy residues 1098-1129 (PCPT…VLAA) and 1137-1146 (SSGQSSVLSG). A phosphoserine mark is found at serine 1104, serine 1109, serine 1111, and serine 1115. Threonine 1119 is subject to Phosphothreonine. Residues 1204-1220 (KASTDGATATDRYNSYN) show a composition bias toward polar residues. Over residues 1225-1235 (KATAAPTAASS) the composition is skewed to low complexity. A phosphoserine mark is found at serine 1270 and serine 1276.

It belongs to the suppressor of sable family. In terms of assembly, interacts with WDR82.

Its subcellular location is the chromosome. Its function is as follows. RNA-binding protein that suppresses transcription of long non-coding RNAs (lncRNAs). LncRNAs are defined as transcripts more than 200 nucleotides that are not translated into protein. Together with WDR82, part of a transcription termination checkpoint that promotes transcription termination of lncRNAs and their subsequent degradation by the exosome. The transcription termination checkpoint is activated by the inefficiently spliced first exon of lncRNAs. The protein is Zinc finger CCCH domain-containing protein 4 of Mus musculus (Mouse).